A 431-amino-acid chain; its full sequence is Serine--tRNA ligase (431 aa).

Residue 236-238 (TAE) participates in L-serine binding. 267–269 (RSE) lines the ATP pocket. Glu290 lines the L-serine pocket. 354 to 357 (EISS) is an ATP binding site. Position 389 (Ser389) interacts with L-serine.

It belongs to the class-II aminoacyl-tRNA synthetase family. Type-1 seryl-tRNA synthetase subfamily. Homodimer. The tRNA molecule binds across the dimer.

It localises to the cytoplasm. It carries out the reaction tRNA(Ser) + L-serine + ATP = L-seryl-tRNA(Ser) + AMP + diphosphate + H(+). It catalyses the reaction tRNA(Sec) + L-serine + ATP = L-seryl-tRNA(Sec) + AMP + diphosphate + H(+). The protein operates within aminoacyl-tRNA biosynthesis; selenocysteinyl-tRNA(Sec) biosynthesis; L-seryl-tRNA(Sec) from L-serine and tRNA(Sec): step 1/1. Its function is as follows. Catalyzes the attachment of serine to tRNA(Ser). Is also able to aminoacylate tRNA(Sec) with serine, to form the misacylated tRNA L-seryl-tRNA(Sec), which will be further converted into selenocysteinyl-tRNA(Sec). This is Serine--tRNA ligase from Herminiimonas arsenicoxydans.